Reading from the N-terminus, the 194-residue chain is Probable calcium-binding protein CML45 (194 aa).

Positions 52–63 (NNKDQQETLTKQ) are enriched in basic and acidic residues. A disordered region spans residues 52–81 (NNKDQQETLTKQEDDDDDDDDDDDDDDDDI). The span at 64-81 (EDDDDDDDDDDDDDDDDI) shows a compositional bias: acidic residues. EF-hand domains lie at 76–98 (DDDD…LGLF), 122–157 (ASLE…LGFK), and 160–194 (SYLD…TSFY). Ca(2+) is bound by residues aspartate 135, asparagine 137, aspartate 139, glutamate 146, aspartate 173, asparagine 175, aspartate 177, lysine 179, and glutamate 184.

Functionally, potential calcium sensor. The polypeptide is Probable calcium-binding protein CML45 (Arabidopsis thaliana (Mouse-ear cress)).